Reading from the N-terminus, the 72-residue chain is MAFSNPFDDPQGAFYILRNAQGQFSLWPQQCVLPAGWDIVCQPQSQASCQQWLEAHWRTLTPTNFTQLQEAQ.

The protein belongs to the MbtH-like family.

Involved in the biosynthesis of the siderophore enterobactin (enterochelin), which is a macrocyclic trimeric lactone of N-(2,3-dihydroxybenzoyl)-serine. Plays a role in the catalytic function of EntF. It is required for adenylation of amino acids in non-ribosomal peptide biosynthesis. The polypeptide is Enterobactin biosynthesis protein YbdZ (Escherichia coli (strain K12)).